Here is a 369-residue protein sequence, read N- to C-terminus: Ubiquitin-conjugating enzyme E2 Q2 (369 aa).

Positions 117–143 are disordered; sequence DQPLPTGQNGTTEEVTSEEEEEEEMAE. A compositionally biased stretch (acidic residues) spans 131 to 143; sequence VTSEEEEEEEMAE. The UBC core domain occupies 198–362; it reads QASDRLMKEL…VQIHEKNGWY (165 aa). The active-site Glycyl thioester intermediate is the Cys298.

The protein belongs to the ubiquitin-conjugating enzyme family. Post-translationally, auto-ubiquitinated in vitro. As to expression, detected at embryo implantation sites in the luminal epithelium of pregnant endometrium. Detected at low levels in ovary and liver.

It is found in the cytoplasm. It carries out the reaction S-ubiquitinyl-[E1 ubiquitin-activating enzyme]-L-cysteine + [E2 ubiquitin-conjugating enzyme]-L-cysteine = [E1 ubiquitin-activating enzyme]-L-cysteine + S-ubiquitinyl-[E2 ubiquitin-conjugating enzyme]-L-cysteine.. It functions in the pathway protein modification; protein ubiquitination. Its function is as follows. Accepts ubiquitin from the E1 complex and catalyzes its covalent attachment to other proteins. In vitro catalyzes 'Lys-48'-linked polyubiquitination. The sequence is that of Ubiquitin-conjugating enzyme E2 Q2 (UBE2Q2) from Oryctolagus cuniculus (Rabbit).